The chain runs to 327 residues: GMP reductase (327 aa).

Cys176 acts as the Thioimidate intermediate in catalysis. 205–228 (IIADGGIRTHGDIAKSIRFGASMV) lines the NADP(+) pocket.

Belongs to the IMPDH/GMPR family. GuaC type 2 subfamily.

It carries out the reaction IMP + NH4(+) + NADP(+) = GMP + NADPH + 2 H(+). Functionally, catalyzes the irreversible NADPH-dependent deamination of GMP to IMP. It functions in the conversion of nucleobase, nucleoside and nucleotide derivatives of G to A nucleotides, and in maintaining the intracellular balance of A and G nucleotides. This is GMP reductase from Streptococcus agalactiae serotype III (strain NEM316).